A 450-amino-acid chain; its full sequence is 23S rRNA (uracil(1939)-C(5))-methyltransferase RlmD (450 aa).

The interval 1–22 (MAKHDRGLRFQPAGGSRAPQIP) is disordered. The TRAM domain maps to 20–78 (QIPVGKKQRLTIQRLANDGRGIAFVEGRTWFVSGALAGEEVEARVLGSHGKVVEARAER). [4Fe-4S] cluster-binding residues include C91, C97, C100, and C179. S-adenosyl-L-methionine is bound by residues Q283, F312, N317, E333, D360, and D381. C407 serves as the catalytic Nucleophile.

The protein belongs to the class I-like SAM-binding methyltransferase superfamily. RNA M5U methyltransferase family. RlmD subfamily.

The catalysed reaction is uridine(1939) in 23S rRNA + S-adenosyl-L-methionine = 5-methyluridine(1939) in 23S rRNA + S-adenosyl-L-homocysteine + H(+). Functionally, catalyzes the formation of 5-methyl-uridine at position 1939 (m5U1939) in 23S rRNA. The sequence is that of 23S rRNA (uracil(1939)-C(5))-methyltransferase RlmD from Pseudomonas fluorescens (strain ATCC BAA-477 / NRRL B-23932 / Pf-5).